Here is a 140-residue protein sequence, read N- to C-terminus: Odorant-binding protein 10 (140 aa).

A signal peptide spans 1–25 (MTSFRLANLTVFLVLLFCFMRGVHS).

This sequence belongs to the PBP/GOBP family. As to expression, high-level expression in female mouth parts, particularly in the proboscis (at protein level). Low-level expression in female antenna (at protein level). Female salivary gland. Female chemosensory organs: antenna, palp and proboscis. Male antenna, wing and maxillary palp. Expressed at higher levels in male tissues compared to female tissues. Not detected in midgut.

It localises to the secreted. Functionally, involved in modulation of blood-feeding behavior and capacity in female mosquitoes. Required for normal oviposition. Required for normal fecundity and fertility of female mosquitoes. Required for normal expression of VGA1 gene, which encodes the egg yolk protein vitellogenin-A1. Required for normal female longevity when mosquitoes are maintained on regular sugar meal. Its function is as follows. (Microbial infection) Facilitates shedding of dengue virus type 2 particles into mosquito saliva. Does not affect dengue virus type 2 replication or infection prevalence in midgut and salivary glands at 14 days after blood feeding. In terms of biological role, (Microbial infection) Facilitates shedding of Zika virus particles into mosquito saliva. Does not affect Zika virus replication or infection prevalence in midgut and salivary glands at 14 days after blood feeding. The sequence is that of Odorant-binding protein 10 from Aedes aegypti (Yellowfever mosquito).